The chain runs to 286 residues: Putative electron transfer flavoprotein subunit YgcQ (286 aa).

225 to 253 lines the FAD pocket; that stretch reads VCIVVGASGAAALMAGVRNSKFVVAINHD.

It belongs to the ETF alpha-subunit/FixB family. YgcQ and YgcR form a heterodimer.

May play a role in a redox process. In Escherichia coli (strain K12), this protein is Putative electron transfer flavoprotein subunit YgcQ (ygcQ).